Here is a 428-residue protein sequence, read N- to C-terminus: Zinc-type alcohol dehydrogenase B (428 aa).

Zn(2+) is bound by residues Cys116, His137, Cys167, Cys170, Cys173, and Cys181. Residue Lys393 is modified to N6-benzoyllysine.

Belongs to the zinc-containing alcohol dehydrogenase family. Class-III subfamily. As to quaternary structure, homodimer. Requires Zn(2+) as cofactor. In terms of processing, benzoylation at lys-393 by gcnE leads to the activation od adhB.

It catalyses the reaction a primary alcohol + NAD(+) = an aldehyde + NADH + H(+). The catalysed reaction is a secondary alcohol + NAD(+) = a ketone + NADH + H(+). Its function is as follows. Zinc-type alcohol dehydrogenase involved in development, secondary metabolism, pathogenicity, and stress response. Specifically controls the formation of sclerotia and the biosynthesis of aflatoxin. Contribute to seed colonization of A flavus on host maize seed. The chain is Zinc-type alcohol dehydrogenase B from Aspergillus flavus (strain ATCC 200026 / FGSC A1120 / IAM 13836 / NRRL 3357 / JCM 12722 / SRRC 167).